Reading from the N-terminus, the 378-residue chain is Succinyl-diaminopimelate desuccinylase (378 aa).

H68 serves as a coordination point for Zn(2+). D70 is an active-site residue. D101 is a binding site for Zn(2+). The active-site Proton acceptor is E135. Residues E136, E164, and H350 each coordinate Zn(2+).

Belongs to the peptidase M20A family. DapE subfamily. Homodimer. Zn(2+) is required as a cofactor. Co(2+) serves as cofactor.

It catalyses the reaction N-succinyl-(2S,6S)-2,6-diaminopimelate + H2O = (2S,6S)-2,6-diaminopimelate + succinate. It participates in amino-acid biosynthesis; L-lysine biosynthesis via DAP pathway; LL-2,6-diaminopimelate from (S)-tetrahydrodipicolinate (succinylase route): step 3/3. Catalyzes the hydrolysis of N-succinyl-L,L-diaminopimelic acid (SDAP), forming succinate and LL-2,6-diaminopimelate (DAP), an intermediate involved in the bacterial biosynthesis of lysine and meso-diaminopimelic acid, an essential component of bacterial cell walls. This is Succinyl-diaminopimelate desuccinylase from Vibrio atlanticus (strain LGP32) (Vibrio splendidus (strain Mel32)).